The following is a 202-amino-acid chain: Cytochrome c biogenesis ATP-binding export protein CcmA (202 aa).

Residues 3-200 (LAAENLSGER…EGTQELKMGA (198 aa)) enclose the ABC transporter domain. 35–42 (GPNGAGKS) provides a ligand contact to ATP.

It belongs to the ABC transporter superfamily. CcmA exporter (TC 3.A.1.107) family. As to quaternary structure, the complex is composed of two ATP-binding proteins (CcmA) and two transmembrane proteins (CcmB).

It is found in the cell inner membrane. It carries out the reaction heme b(in) + ATP + H2O = heme b(out) + ADP + phosphate + H(+). Part of the ABC transporter complex CcmAB involved in the biogenesis of c-type cytochromes; once thought to export heme, this seems not to be the case, but its exact role is uncertain. Responsible for energy coupling to the transport system. The chain is Cytochrome c biogenesis ATP-binding export protein CcmA from Chelativorans sp. (strain BNC1).